A 379-amino-acid chain; its full sequence is Arginine biosynthesis bifunctional protein ArgJ (379 aa).

6 residues coordinate substrate: Thr141, Lys163, Thr174, Glu252, Asn374, and Thr379. Thr174 (nucleophile) is an active-site residue.

It belongs to the ArgJ family. As to quaternary structure, heterotetramer of two alpha and two beta chains.

It localises to the cytoplasm. It carries out the reaction N(2)-acetyl-L-ornithine + L-glutamate = N-acetyl-L-glutamate + L-ornithine. It catalyses the reaction L-glutamate + acetyl-CoA = N-acetyl-L-glutamate + CoA + H(+). The protein operates within amino-acid biosynthesis; L-arginine biosynthesis; L-ornithine and N-acetyl-L-glutamate from L-glutamate and N(2)-acetyl-L-ornithine (cyclic): step 1/1. It participates in amino-acid biosynthesis; L-arginine biosynthesis; N(2)-acetyl-L-ornithine from L-glutamate: step 1/4. Functionally, catalyzes two activities which are involved in the cyclic version of arginine biosynthesis: the synthesis of N-acetylglutamate from glutamate and acetyl-CoA as the acetyl donor, and of ornithine by transacetylation between N(2)-acetylornithine and glutamate. The sequence is that of Arginine biosynthesis bifunctional protein ArgJ from Aquifex aeolicus (strain VF5).